We begin with the raw amino-acid sequence, 360 residues long: Phospho-N-acetylmuramoyl-pentapeptide-transferase (360 aa).

Helical transmembrane passes span 27-47, 71-91, 93-113, 134-154, 168-188, 199-219, 239-259, 262-282, 288-308, and 337-357; these read GAFM…INVL, TPTM…LLWA, WDNP…LIGF, LALG…NHPA, TLIN…VGSA, GLAI…AYAV, ILIF…YNAP, AVFM…AIAV, LVLA…IIQV, and TIVI…LATL.

It belongs to the glycosyltransferase 4 family. MraY subfamily. Requires Mg(2+) as cofactor.

It is found in the cell inner membrane. It carries out the reaction UDP-N-acetyl-alpha-D-muramoyl-L-alanyl-gamma-D-glutamyl-meso-2,6-diaminopimeloyl-D-alanyl-D-alanine + di-trans,octa-cis-undecaprenyl phosphate = di-trans,octa-cis-undecaprenyl diphospho-N-acetyl-alpha-D-muramoyl-L-alanyl-D-glutamyl-meso-2,6-diaminopimeloyl-D-alanyl-D-alanine + UMP. It participates in cell wall biogenesis; peptidoglycan biosynthesis. Catalyzes the initial step of the lipid cycle reactions in the biosynthesis of the cell wall peptidoglycan: transfers peptidoglycan precursor phospho-MurNAc-pentapeptide from UDP-MurNAc-pentapeptide onto the lipid carrier undecaprenyl phosphate, yielding undecaprenyl-pyrophosphoryl-MurNAc-pentapeptide, known as lipid I. This Ruegeria pomeroyi (strain ATCC 700808 / DSM 15171 / DSS-3) (Silicibacter pomeroyi) protein is Phospho-N-acetylmuramoyl-pentapeptide-transferase.